The primary structure comprises 434 residues: D-amino acid dehydrogenase (434 aa).

3–17 (VIVLGSGVIGTTTAY) serves as a coordination point for FAD.

Belongs to the DadA oxidoreductase family. The cofactor is FAD.

It catalyses the reaction a D-alpha-amino acid + A + H2O = a 2-oxocarboxylate + AH2 + NH4(+). It functions in the pathway amino-acid degradation; D-alanine degradation; NH(3) and pyruvate from D-alanine: step 1/1. Its function is as follows. Oxidative deamination of D-amino acids. This chain is D-amino acid dehydrogenase, found in Bordetella petrii (strain ATCC BAA-461 / DSM 12804 / CCUG 43448).